A 148-amino-acid chain; its full sequence is 3-dehydroquinate dehydratase (148 aa).

Tyrosine 23 serves as the catalytic Proton acceptor. The substrate site is built by asparagine 75, histidine 81, and aspartate 88. Histidine 101 (proton donor) is an active-site residue. Substrate contacts are provided by residues 102-103 (LS) and arginine 112.

Belongs to the type-II 3-dehydroquinase family. Homododecamer.

It catalyses the reaction 3-dehydroquinate = 3-dehydroshikimate + H2O. Its pathway is metabolic intermediate biosynthesis; chorismate biosynthesis; chorismate from D-erythrose 4-phosphate and phosphoenolpyruvate: step 3/7. Its function is as follows. Catalyzes a trans-dehydration via an enolate intermediate. The polypeptide is 3-dehydroquinate dehydratase (Xylella fastidiosa (strain M23)).